We begin with the raw amino-acid sequence, 185 residues long: MNNQKGLSVKSVVAIGIGAAIYVILARFTSIPTGIPNTNIEIVYPFLALLATIYGPVVGFSVGFIGHALSDFLMYGQTWWSWVLATAVLGLIIGLYGMRLDLENGVFTTKQMIGFNIVQIIANVVSWLIIAPVGDILIYSEPQNKVFLQGATATITNSISILILGTILLKAYAATKVKKGSLRRD.

Transmembrane regions (helical) follow at residues 6-26, 46-66, 78-98, 113-133, and 147-167; these read GLSVKSVVAIGIGAAIYVILA, FLALLATIYGPVVGFSVGFIG, TWWSWVLATAVLGLIIGLYGM, IGFNIVQIIANVVSWLIIAPV, and FLQGATATITNSISILILGTI.

It belongs to the UPF0397 family.

The protein localises to the cell membrane. The protein is UPF0397 protein LJ_1703 of Lactobacillus johnsonii (strain CNCM I-12250 / La1 / NCC 533).